A 430-amino-acid chain; its full sequence is Enolase (430 aa).

Residue glutamine 163 participates in (2R)-2-phosphoglycerate binding. The Proton donor role is filled by glutamate 205. Residues aspartate 242, glutamate 287, and aspartate 314 each coordinate Mg(2+). The (2R)-2-phosphoglycerate site is built by lysine 339, arginine 368, serine 369, and lysine 390. Catalysis depends on lysine 339, which acts as the Proton acceptor.

Belongs to the enolase family. It depends on Mg(2+) as a cofactor.

The protein resides in the cytoplasm. Its subcellular location is the secreted. It localises to the cell surface. The enzyme catalyses (2R)-2-phosphoglycerate = phosphoenolpyruvate + H2O. Its pathway is carbohydrate degradation; glycolysis; pyruvate from D-glyceraldehyde 3-phosphate: step 4/5. In terms of biological role, catalyzes the reversible conversion of 2-phosphoglycerate (2-PG) into phosphoenolpyruvate (PEP). It is essential for the degradation of carbohydrates via glycolysis. This Exiguobacterium sp. (strain ATCC BAA-1283 / AT1b) protein is Enolase.